We begin with the raw amino-acid sequence, 198 residues long: Recombination protein RecR (198 aa).

The C4-type zinc-finger motif lies at 57-72 (CSVCGHITENDPCYIC). Residues 80–175 (SVICVVEDDK…KVTRLAQGLS (96 aa)) enclose the Toprim domain.

This sequence belongs to the RecR family.

May play a role in DNA repair. It seems to be involved in an RecBC-independent recombinational process of DNA repair. It may act with RecF and RecO. In Staphylococcus epidermidis (strain ATCC 35984 / DSM 28319 / BCRC 17069 / CCUG 31568 / BM 3577 / RP62A), this protein is Recombination protein RecR.